Here is a 422-residue protein sequence, read N- to C-terminus: Serine--tRNA ligase (422 aa).

Position 229 to 231 (Thr-229 to Glu-231) interacts with L-serine. Arg-260–Glu-262 lines the ATP pocket. Glu-283 is a binding site for L-serine. Glu-347–Ser-350 is an ATP binding site. Ser-383 contacts L-serine.

The protein belongs to the class-II aminoacyl-tRNA synthetase family. Type-1 seryl-tRNA synthetase subfamily. As to quaternary structure, homodimer. The tRNA molecule binds across the dimer.

The protein localises to the cytoplasm. It catalyses the reaction tRNA(Ser) + L-serine + ATP = L-seryl-tRNA(Ser) + AMP + diphosphate + H(+). It carries out the reaction tRNA(Sec) + L-serine + ATP = L-seryl-tRNA(Sec) + AMP + diphosphate + H(+). It functions in the pathway aminoacyl-tRNA biosynthesis; selenocysteinyl-tRNA(Sec) biosynthesis; L-seryl-tRNA(Sec) from L-serine and tRNA(Sec): step 1/1. In terms of biological role, catalyzes the attachment of serine to tRNA(Ser). Is also able to aminoacylate tRNA(Sec) with serine, to form the misacylated tRNA L-seryl-tRNA(Sec), which will be further converted into selenocysteinyl-tRNA(Sec). In Citrifermentans bemidjiense (strain ATCC BAA-1014 / DSM 16622 / JCM 12645 / Bem) (Geobacter bemidjiensis), this protein is Serine--tRNA ligase.